The following is an 860-amino-acid chain: Beta-glucosidase 1 (860 aa).

The signal sequence occupies residues 1–19 (MKLSWLEAAALTAASVVSA). Asn-61, Asn-211, and Asn-252 each carry an N-linked (GlcNAc...) asparagine glycan. The active site involves Asp-280. 12 N-linked (GlcNAc...) asparagine glycosylation sites follow: Asn-315, Asn-322, Asn-354, Asn-387, Asn-442, Asn-523, Asn-542, Asn-564, Asn-658, Asn-668, Asn-690, and Asn-712.

The protein belongs to the glycosyl hydrolase 3 family.

It catalyses the reaction Hydrolysis of terminal, non-reducing beta-D-glucosyl residues with release of beta-D-glucose.. It participates in glycan metabolism; cellulose degradation. The chain is Beta-glucosidase 1 from Aspergillus aculeatus.